An 85-amino-acid polypeptide reads, in one-letter code: MAIFKSISSISNPTGSMGSSIGTSNIDGLTNNNNSIACFDSDYSGLNGLGGLGGFNGGGCGGCGDSNTNIINIDIDLCRRGHRCC.

Belongs to the UPF0512 family.

The polypeptide is UPF0512 protein U (Dictyostelium discoideum (Social amoeba)).